Consider the following 1464-residue polypeptide: Neuropathy target esterase sws (1464 aa).

The Lumenal segment spans residues 1-34 (MDVLELLRASATGCYNTIFSEAWHQYVHKQIAAA). Residues 35-55 (VYWYGALFLLGVLLFVWFLYF) traverse the membrane as a helical segment. Over 56 to 1464 (KRLARLRLRD…GNTTNNDTKN (1409 aa)) the chain is Cytoplasmic. 176 to 303 (IFGHFEKPIF…IRVIQVIMIR (128 aa)) contacts a nucleoside 3',5'-cyclic phosphate. Disordered regions lie at residues 329-393 (NKNS…LHYH) and 409-438 (QQQQ…SSPT). Positions 338–367 (TGQTTSNVQSQTSQATQSRPSGTTRTPTSP) are enriched in low complexity. A compositionally biased stretch (polar residues) spans 409 to 420 (QQQQSLNSPRRN). At Ser421 the chain carries Phosphoserine. The segment covering 422 to 438 (TAHVSEAAAASTASSPT) has biased composition (low complexity). Residues 456–586 (ELGL…VVRR) and 575–702 (IVLG…LSHR) contribute to the a nucleoside 3',5'-cyclic phosphate site. In terms of domain architecture, PNPLA spans 928-1094 (LVLGGGGARG…VNNLPGHLWR (167 aa)). Residues 932-937 (GGGARG) carry the GXGXXG motif. Residues 959-963 (GVSIG) carry the GXSXG motif. Residue Ser961 is the Nucleophile of the active site. Asp1081 (proton acceptor) is an active-site residue. Positions 1081–1083 (DGG) match the DGA/G motif. Phosphoserine is present on Ser1175. Disordered stretches follow at residues 1352–1374 (VDKA…PTPS) and 1400–1464 (ATNT…DTKN). The span at 1429 to 1444 (KRTEQDEHELEHEQVV) shows a compositional bias: basic and acidic residues. A compositionally biased stretch (polar residues) spans 1450–1464 (MDKQQGNTTNNDTKN).

The protein belongs to the NTE family. In terms of assembly, interacts with Pka-C3; interaction inhibits the catalytic function of Pka-C3 and the esterase activity of sws.

It is found in the endoplasmic reticulum membrane. It carries out the reaction a 1-acyl-sn-glycero-3-phosphocholine + H2O = sn-glycerol 3-phosphocholine + a fatty acid + H(+). Functionally, phospholipase B that deacylates intracellular phosphatidylcholine (PtdCho), generating glycerophosphocholine (GroPtdCho). This deacylation occurs at both sn-2 and sn-1 positions of PtdCho. Its specific chemical modification by certain organophosphorus (OP) compounds leads to distal axonopathy. Plays a role in the signaling mechanism between neurons and glia that regulates glia wrapping during development of the adult brain. Essential for membrane lipid homeostasis and cell survival in both neurons and glia of the adult brain. This Drosophila grimshawi (Hawaiian fruit fly) protein is Neuropathy target esterase sws.